Reading from the N-terminus, the 204-residue chain is B9 domain-containing protein 1 (204 aa).

The 119-residue stretch at 9-127 (FLLMVNGQVE…TIPMFVPEST (119 aa)) folds into the C2 B9-type domain. The disordered stretch occupies residues 182–204 (GYDTGPSDTQGVLGPSPPQSFPQ).

It belongs to the B9D family. In terms of assembly, part of the tectonic-like complex (also named B9 complex).

The protein resides in the cytoplasm. The protein localises to the cytoskeleton. It localises to the cilium basal body. Its subcellular location is the cilium axoneme. Functionally, component of the tectonic-like complex, a complex localized at the transition zone of primary cilia and acting as a barrier that prevents diffusion of transmembrane proteins between the cilia and plasma membranes. Required for ciliogenesis and sonic hedgehog/SHH signaling. The polypeptide is B9 domain-containing protein 1 (B9D1) (Homo sapiens (Human)).